Consider the following 798-residue polypeptide: Acetyl-CoA decarbonylase/synthase complex subunit alpha 2 (798 aa).

[4Fe-4S] cluster contacts are provided by cysteine 65, cysteine 68, cysteine 69, cysteine 71, cysteine 76, and cysteine 86. Residue histidine 109 participates in CO binding. Residues histidine 246, cysteine 274, and cysteine 313 each coordinate [Ni-4Fe-4S] cluster. 2 consecutive 4Fe-4S ferredoxin-type domains span residues 395-424 (EEQF…IGEA) and 434-463 (SKLE…IDMY). 8 residues coordinate [4Fe-4S] cluster: cysteine 405, cysteine 408, cysteine 411, cysteine 415, cysteine 443, cysteine 446, cysteine 449, and cysteine 453. 3 residues coordinate [Ni-4Fe-4S] cluster: cysteine 511, cysteine 540, and cysteine 575.

Belongs to the Ni-containing carbon monoxide dehydrogenase family. Heterotetramer of two alpha and two epsilon subunits. The ACDS complex is made up of alpha, epsilon, beta, gamma and delta subunits with a probable stoichiometry of (alpha(2)epsilon(2))(4)-beta(8)-(gamma(1)delta(1))(8). The cofactor is [4Fe-4S] cluster. [Ni-4Fe-4S] cluster serves as cofactor.

It catalyses the reaction CO + 2 oxidized [2Fe-2S]-[ferredoxin] + H2O = 2 reduced [2Fe-2S]-[ferredoxin] + CO2 + 2 H(+). Functionally, part of the ACDS complex that catalyzes the reversible cleavage of acetyl-CoA, allowing autotrophic growth from CO(2). The alpha-epsilon subcomponent functions as a carbon monoxide dehydrogenase. The polypeptide is Acetyl-CoA decarbonylase/synthase complex subunit alpha 2 (Archaeoglobus fulgidus (strain ATCC 49558 / DSM 4304 / JCM 9628 / NBRC 100126 / VC-16)).